The following is a 111-amino-acid chain: BET1-like protein (111 aa).

Residues 1-86 (MADWARAQSP…MARSGRDNRK (86 aa)) lie on the Cytoplasmic side of the membrane. A phosphoserine mark is found at S9 and S37. In terms of domain architecture, t-SNARE coiled-coil homology spans 15–77 (EILDRENKRM…TGSVKRFSTM (63 aa)). The helical; Anchor for type IV membrane protein transmembrane segment at 87–107 (LLCGVAVGLIVAFFILSYLLS) threads the bilayer. The Lumenal segment spans residues 108–111 (RART).

Component of a SNARE complex consisting of STX5, YKT6, GOSR1 and BET1L. Interacts with STX5.

Its subcellular location is the golgi apparatus membrane. It localises to the golgi apparatus. It is found in the trans-Golgi network membrane. Vesicle SNARE required for targeting and fusion of retrograde transport vesicles with the Golgi complex. Required for the integrity of the Golgi complex. The polypeptide is BET1-like protein (Bos taurus (Bovine)).